The following is a 208-amino-acid chain: Uracil phosphoribosyltransferase (208 aa).

Residues Arg78, Arg103, and 130 to 138 contribute to the 5-phospho-alpha-D-ribose 1-diphosphate site; that span reads DPMLATGGS. Uracil is bound by residues Ile193 and 198–200; that span reads GDA. Asp199 contributes to the 5-phospho-alpha-D-ribose 1-diphosphate binding site.

This sequence belongs to the UPRTase family. Mg(2+) serves as cofactor.

It carries out the reaction UMP + diphosphate = 5-phospho-alpha-D-ribose 1-diphosphate + uracil. It functions in the pathway pyrimidine metabolism; UMP biosynthesis via salvage pathway; UMP from uracil: step 1/1. Allosterically activated by GTP. In terms of biological role, catalyzes the conversion of uracil and 5-phospho-alpha-D-ribose 1-diphosphate (PRPP) to UMP and diphosphate. This Escherichia coli O139:H28 (strain E24377A / ETEC) protein is Uracil phosphoribosyltransferase.